Here is a 527-residue protein sequence, read N- to C-terminus: Type-2 serine--tRNA ligase (527 aa).

Ala-317 lines the L-serine pocket. Cys-319 is a Zn(2+) binding site. L-serine is bound at residue Arg-349. ATP is bound by residues 349-351 (RWE) and 360-361 (RV). L-serine is bound at residue 366–368 (RIE). Residues Glu-368 and Cys-478 each contribute to the Zn(2+) site. Arg-485 is an ATP binding site.

This sequence belongs to the class-II aminoacyl-tRNA synthetase family. Type-2 seryl-tRNA synthetase subfamily. Homodimer. It depends on Zn(2+) as a cofactor.

It is found in the cytoplasm. It catalyses the reaction tRNA(Ser) + L-serine + ATP = L-seryl-tRNA(Ser) + AMP + diphosphate + H(+). The enzyme catalyses tRNA(Sec) + L-serine + ATP = L-seryl-tRNA(Sec) + AMP + diphosphate + H(+). The protein operates within aminoacyl-tRNA biosynthesis; selenocysteinyl-tRNA(Sec) biosynthesis; L-seryl-tRNA(Sec) from L-serine and tRNA(Sec): step 1/1. Catalyzes the attachment of serine to tRNA(Ser). Is also able to aminoacylate tRNA(Sec) with serine, to form the misacylated tRNA L-seryl-tRNA(Sec), which will be further converted into selenocysteinyl-tRNA(Sec). The polypeptide is Type-2 serine--tRNA ligase (Methanopyrus kandleri (strain AV19 / DSM 6324 / JCM 9639 / NBRC 100938)).